The sequence spans 381 residues: Queuine tRNA-ribosyltransferase (381 aa).

The active-site Proton acceptor is the Asp-96. Residues 96–100, Asp-150, Gln-193, and Gly-220 each bind substrate; that span reads DSGGF. Residues 251–257 form an RNA binding region; the sequence is GVGSPDS. Asp-270 acts as the Nucleophile in catalysis. An RNA binding; important for wobble base 34 recognition region spans residues 275-279; the sequence is TRIAR. Residues Cys-308, Cys-310, Cys-313, and His-339 each coordinate Zn(2+).

It belongs to the queuine tRNA-ribosyltransferase family. As to quaternary structure, homodimer. Within each dimer, one monomer is responsible for RNA recognition and catalysis, while the other monomer binds to the replacement base PreQ1. Zn(2+) is required as a cofactor.

It catalyses the reaction 7-aminomethyl-7-carbaguanine + guanosine(34) in tRNA = 7-aminomethyl-7-carbaguanosine(34) in tRNA + guanine. Its pathway is tRNA modification; tRNA-queuosine biosynthesis. Catalyzes the base-exchange of a guanine (G) residue with the queuine precursor 7-aminomethyl-7-deazaguanine (PreQ1) at position 34 (anticodon wobble position) in tRNAs with GU(N) anticodons (tRNA-Asp, -Asn, -His and -Tyr). Catalysis occurs through a double-displacement mechanism. The nucleophile active site attacks the C1' of nucleotide 34 to detach the guanine base from the RNA, forming a covalent enzyme-RNA intermediate. The proton acceptor active site deprotonates the incoming PreQ1, allowing a nucleophilic attack on the C1' of the ribose to form the product. After dissociation, two additional enzymatic reactions on the tRNA convert PreQ1 to queuine (Q), resulting in the hypermodified nucleoside queuosine (7-(((4,5-cis-dihydroxy-2-cyclopenten-1-yl)amino)methyl)-7-deazaguanosine). The polypeptide is Queuine tRNA-ribosyltransferase (Bacillus licheniformis (strain ATCC 14580 / DSM 13 / JCM 2505 / CCUG 7422 / NBRC 12200 / NCIMB 9375 / NCTC 10341 / NRRL NRS-1264 / Gibson 46)).